A 205-amino-acid polypeptide reads, in one-letter code: Dephospho-CoA kinase (205 aa).

A DPCK domain is found at 7–205; the sequence is IIGITGRIAS…QEIINYERFE (199 aa). An ATP-binding site is contributed by 15 to 20; sequence ASGKDA.

The protein belongs to the CoaE family.

The protein localises to the cytoplasm. It carries out the reaction 3'-dephospho-CoA + ATP = ADP + CoA + H(+). The protein operates within cofactor biosynthesis; coenzyme A biosynthesis; CoA from (R)-pantothenate: step 5/5. Catalyzes the phosphorylation of the 3'-hydroxyl group of dephosphocoenzyme A to form coenzyme A. In Borrelia garinii subsp. bavariensis (strain ATCC BAA-2496 / DSM 23469 / PBi) (Borreliella bavariensis), this protein is Dephospho-CoA kinase.